The chain runs to 240 residues: UDP-2,3-diacylglucosamine hydrolase (240 aa).

Mn(2+)-binding residues include D8, H10, D41, N79, and H114. 79 to 80 (NR) contributes to the substrate binding site. The substrate site is built by D122, S160, N164, K167, and H195. H195 and H197 together coordinate Mn(2+).

This sequence belongs to the LpxH family. Mn(2+) is required as a cofactor.

Its subcellular location is the cell inner membrane. The catalysed reaction is UDP-2-N,3-O-bis[(3R)-3-hydroxytetradecanoyl]-alpha-D-glucosamine + H2O = 2-N,3-O-bis[(3R)-3-hydroxytetradecanoyl]-alpha-D-glucosaminyl 1-phosphate + UMP + 2 H(+). The protein operates within glycolipid biosynthesis; lipid IV(A) biosynthesis; lipid IV(A) from (3R)-3-hydroxytetradecanoyl-[acyl-carrier-protein] and UDP-N-acetyl-alpha-D-glucosamine: step 4/6. Functionally, hydrolyzes the pyrophosphate bond of UDP-2,3-diacylglucosamine to yield 2,3-diacylglucosamine 1-phosphate (lipid X) and UMP by catalyzing the attack of water at the alpha-P atom. Involved in the biosynthesis of lipid A, a phosphorylated glycolipid that anchors the lipopolysaccharide to the outer membrane of the cell. This Escherichia coli (strain UTI89 / UPEC) protein is UDP-2,3-diacylglucosamine hydrolase.